The following is a 463-amino-acid chain: Retinoic acid receptor RXR-gamma (463 aa).

The modulating stretch occupies residues 1–138; sequence MYGNYSHFMK…TSPGSLVKHI (138 aa). A disordered region spans residues 17 to 53; the sequence is GSPGHSGSTSMSPSAALSTGKPMDSHPSYTDTPVSAP. Over residues 21–33 the composition is skewed to polar residues; that stretch reads HSGSTSMSPSAAL. 2 NR C4-type zinc fingers span residues 139–159 and 175–199; these read CAICGDRSSGKHYGVYSCEGC and CRDNKDCLIDKRQRNRCQYCRYQKC. A DNA-binding region (nuclear receptor) is located at residues 139–204; sequence CAICGDRSSG…RYQKCLVMGM (66 aa). The interval 205 to 230 is hinge; that stretch reads KREAVQEERQRSRERAESEAECASSG. A compositionally biased stretch (basic and acidic residues) spans 211-222; that stretch reads EERQRSRERAES. Residues 211 to 232 form a disordered region; it reads EERQRSRERAESEAECASSGHE. In terms of domain architecture, NR LBD spans 231 to 459; the sequence is HEDMPVERIL…TFLMEMLETP (229 aa).

Belongs to the nuclear hormone receptor family. NR2 subfamily. As to quaternary structure, homodimer. Heterodimer with a RAR molecule. Binds DNA preferentially as a RAR/RXR heterodimer. Interacts with RARA. In terms of processing, acetylated by EP300.

It localises to the nucleus. It is found in the cytoplasm. In terms of biological role, receptor for retinoic acid. Retinoic acid receptors bind as heterodimers to their target response elements in response to their ligands, all-trans or 9-cis retinoic acid, and regulate gene expression in various biological processes. The RAR/RXR heterodimers bind to the retinoic acid response elements (RARE) composed of tandem 5'-AGGTCA-3' sites known as DR1-DR5. The high affinity ligand for RXRs is 9-cis retinoic acid. The chain is Retinoic acid receptor RXR-gamma (RXRG) from Sus scrofa (Pig).